We begin with the raw amino-acid sequence, 323 residues long: Biotin synthase (323 aa).

Residues 46 to 264 enclose the Radical SAM core domain; it reads TEIQLSSLLS…IAVARITMPR (219 aa). Residues C61, C65, and C68 each contribute to the [4Fe-4S] cluster site. Residues C105, C136, C196, and R268 each contribute to the [2Fe-2S] cluster site.

Belongs to the radical SAM superfamily. Biotin synthase family. Homodimer. It depends on [4Fe-4S] cluster as a cofactor. [2Fe-2S] cluster serves as cofactor.

The enzyme catalyses (4R,5S)-dethiobiotin + (sulfur carrier)-SH + 2 reduced [2Fe-2S]-[ferredoxin] + 2 S-adenosyl-L-methionine = (sulfur carrier)-H + biotin + 2 5'-deoxyadenosine + 2 L-methionine + 2 oxidized [2Fe-2S]-[ferredoxin]. It participates in cofactor biosynthesis; biotin biosynthesis; biotin from 7,8-diaminononanoate: step 2/2. In terms of biological role, catalyzes the conversion of dethiobiotin (DTB) to biotin by the insertion of a sulfur atom into dethiobiotin via a radical-based mechanism. The polypeptide is Biotin synthase (Bordetella avium (strain 197N)).